The sequence spans 39 residues: Natriuretic peptide CnNP-b (39 aa).

Positions 1-8 are excised as a propeptide; sequence SGSKTATK. C12 and C28 are joined by a disulfide. The tract at residues 20–39 is disordered; sequence IGSTSGMGCGGVPKPTPGGS.

Belongs to the natriuretic peptide family. In terms of tissue distribution, expressed by the venom gland.

It is found in the secreted. Functionally, snake venom natriuretic peptide that targets both NPR1 and NPR2. Exhibits hypotensive and vasodepressor activities. This is Natriuretic peptide CnNP-b from Cryptophis nigrescens (Eastern small-eyed snake).